A 101-amino-acid polypeptide reads, in one-letter code: Small integral membrane protein 21 (101 aa).

A helical membrane pass occupies residues 49-65; the sequence is HIRFFTLLVLFHVMVLL.

It localises to the membrane. The polypeptide is Small integral membrane protein 21 (SMIM21) (Homo sapiens (Human)).